The chain runs to 233 residues: Ion-translocating oxidoreductase complex subunit E (233 aa).

Transmembrane regions (helical) follow at residues 18 to 38, 39 to 59, 69 to 89, 92 to 112, 128 to 148, and 182 to 202; these read ALVQLLGLCPLLAVSSTATNA, LGLGLATTLVLVCTNTAVSAL, IPIYVMIIASVVSTVQMLINA, FGLYQSLGIFIPLIVTNCIVI, ALDGFAMGMGATCALFVLGAL, and PFLLAMLPPGAFIGLGLLLAG.

It belongs to the NqrDE/RnfAE family. The complex is composed of six subunits: RnfA, RnfB, RnfC, RnfD, RnfE and RnfG.

The protein resides in the cell inner membrane. In terms of biological role, part of a membrane-bound complex that couples electron transfer with translocation of ions across the membrane. The sequence is that of Ion-translocating oxidoreductase complex subunit E from Yersinia pseudotuberculosis serotype IB (strain PB1/+).